The chain runs to 230 residues: Ribonuclease 3 (230 aa).

An RNase III domain is found at 6–135 (TTELKERYGI…FLGALYLDQK (130 aa)). E48 serves as a coordination point for Mg(2+). The active site involves D52. D121 and E124 together coordinate Mg(2+). The active site involves E124. In terms of domain architecture, DRBM spans 161–230 (DHKTQLQEVL…AERALKSIPQ (70 aa)).

This sequence belongs to the ribonuclease III family. In terms of assembly, homodimer. Requires Mg(2+) as cofactor.

The protein resides in the cytoplasm. The catalysed reaction is Endonucleolytic cleavage to 5'-phosphomonoester.. In terms of biological role, digests double-stranded RNA. Involved in the processing of primary rRNA transcript to yield the immediate precursors to the large and small rRNAs (23S and 16S). Processes some mRNAs, and tRNAs when they are encoded in the rRNA operon. Processes pre-crRNA and tracrRNA of type II CRISPR loci if present in the organism. The chain is Ribonuclease 3 from Enterococcus faecalis (strain ATCC 700802 / V583).